Consider the following 2377-residue polypeptide: Serine/threonine-protein kinase WNK1 (2377 aa).

Disordered regions lie at residues 1 to 79 (MSDG…RFFR) and 93 to 203 (LPGL…QQDD). Phosphothreonine is present on residues Thr-17 and Thr-58. Positions 48–64 (RTEEYRRRRHTMDKDSR) are enriched in basic and acidic residues. 2 stretches are compositionally biased toward low complexity: residues 101-111 (PQPSVPAVVPQ) and 127-141 (VASQ…AASP). The span at 149–158 (SATTTVPSST) shows a compositional bias: polar residues. Residues Ser-165 and Ser-172 each carry the phosphoserine modification. The region spanning 221-479 (LKFDIEIGRG…IKDLLNHAFF (259 aa)) is the Protein kinase domain. Residue Ser-231 participates in ATP binding. Chloride contacts are provided by Phe-283 and Leu-299. Residues 301–304 (TELM) and Lys-351 contribute to the ATP site. Asp-368 serves as the catalytic Proton acceptor. The chloride site is built by Leu-369 and Leu-371. Ser-378 and Ser-382 each carry phosphoserine; by autocatalysis. Positions 488 to 555 (ELAEEDDGEK…VCEGDHKTMA (68 aa)) are autoinhibitory domain. Residues 573-588 (QLVREEQEKRKQEESS) are compositionally biased toward basic and acidic residues. 2 disordered regions span residues 573-782 (QLVR…SAGT) and 1013-1114 (PAVS…SRPK). 3 stretches are compositionally biased toward polar residues: residues 593–628 (NEQQ…STQV), 638–705 (HQQL…QSQP), and 713–733 (SMAQ…VLSS). Residues 629 to 639 (EPEEPEADQHQ) form an interaction with KLHL3 region. A compositionally biased stretch (low complexity) spans 734-746 (QPIQHPQQQGIQP). The span at 747–782 (TVPSQQAVQYSLPQAASSSEGTTAQPVSQPQVSAGT) shows a compositional bias: polar residues. Low complexity predominate over residues 1018–1028 (TQQPPTTSSQQ). Positions 1029 to 1038 (AVLESTQGVS) are enriched in polar residues. The segment covering 1042 to 1058 (PPEQTPITQSQPTQPVP) has biased composition (low complexity). A compositionally biased stretch (polar residues) spans 1075–1085 (SDGNENAPSSS). Basic residues predominate over residues 1093-1114 (TKRHYRKSVRSRSRHEKTSRPK). The short motif at 1252 to 1255 (RFIV) is the RFXV motif 1 element. The residue at position 1256 (Ser-1256) is a Phosphoserine. Disordered regions lie at residues 1726–1760 (GQVS…TVVP) and 1818–1847 (TMSS…SSGA). Residues 1738 to 1748 (PVGTATGVKPG) are compositionally biased toward low complexity. At Thr-1843 the chain carries Phosphothreonine. Residues 1854 to 1857 (RFQV) carry the RFXV motif 2 motif. The tract at residues 1860 to 1945 (TMDDAQKERK…TKVGRFQVTT (86 aa)) is disordered. Residues 1863–1879 (DAQKERKNRSEDTKSVH) are compositionally biased toward basic and acidic residues. The span at 1882–1900 (SSTSESSVLSSSSPESTLV) shows a compositional bias: low complexity. 2 consecutive short sequence motifs (RFXV motif) follow at residues 1940 to 1943 (RFQV) and 1952 to 1955 (RFSV). The segment covering 1959–1969 (EDKVTELKKEG) has biased composition (basic and acidic residues). 5 disordered regions span residues 1959–1984 (EDKV…QTVI), 1989–2008 (PKKE…PSSD), 2015–2064 (SRGT…DIED), 2107–2191 (VIIP…NLYS), and 2203–2239 (SLSA…SRKG). At Ser-1973 the chain carries Phosphoserine. Residues 1989 to 1998 (PKKEKPELAE) are compositionally biased toward basic and acidic residues. 5 positions are modified to phosphoserine: Ser-2006, Ser-2007, Ser-2022, Ser-2024, and Ser-2027. Over residues 2035 to 2057 (SLPVQNLSQSLSNSFNSSYMSSD) the composition is skewed to low complexity. Ser-2116 carries the post-translational modification Phosphoserine. Positions 2117 to 2129 (GRRRRPTKSKGSK) are enriched in basic residues. A compositionally biased stretch (low complexity) spans 2130-2140 (SSRSSSLGNKS). Positions 2141-2191 (PQLSGNLSGQSGTSVLHPQQTLHPAGNTPETGHNQLLQPLKPSPSSDNLYS) are enriched in polar residues. The segment covering 2208-2232 (GQGTSSTNTVGGTVSSQAAQAQPPA) has biased composition (low complexity). An amphipathic alpha-helix region spans residues 2236–2256 (SRKGTFTDDLHKLVDNWARDA). Phosphoserine occurs at positions 2265 and 2281. Residues 2325–2344 (PAPFGTQWSGTGGPAPQPLG) are disordered. 2 positions are modified to phosphoserine: Ser-2365 and Ser-2367.

It belongs to the protein kinase superfamily. Ser/Thr protein kinase family. WNK subfamily. In terms of assembly, interacts with WNK3. Interacts with WNK4; inhibiting the activity of WNK4. Interacts with SGK1; promoting its activation. Associates with the mTORC2 complex. Interacts with UVRAG. Interacts with isoform 1; inhibiting isoform 1 activity. Mg(2+) serves as cofactor. In terms of processing, autophosphorylated at Ser-378 and Ser-382, promoting its activity. Autophosphorylation at Ser-382 is inhibited by intracellular calcium. Phosphorylation at Thr-58 increases ability to activate SGK1. Ubiquitinated by the BCR(KLHL3) complex, leading to its degradation. Also ubiquitinated by the BCR(KLHL2) complex. Post-translationally, may be O-glycosylated. Widely expressed in both adult and embryonic tissue, with highest levels observed in the testis and lower levels in heart, lung, kidney, placenta, brain and skeletal muscle. Expressed in pancreatic duct. Two isoforms are expressed in heart, a single shorter isoform in the kidney. Locates to the distal convoluted tubule, the medullary collecting duct and the cortical collecting duct of the kidney. As to expression, restricted to the nervous system, expressed preferentially in sensory neurons than in motor neurons and in general more abundant in axons than in cell bodies (at protein level). In the DRG, predominantly expressed in the satellite cells that envelop sensory neurons, but low expression also observed in the cell bodies of neurons (at protein level). In the sciatic nerve, expressed in the Schwann cells that surround axons and in a mosaic distribution of axons (at protein level). In the spinal cord, expressed in superficial layers (LI and LII), as well as in the fibers of the Lissauer tract (at protein level). Also detected in the axon fibers of dorsolateral funiculus and lateral funiculus (at protein level).

It localises to the cytoplasm. It is found in the nucleus. Its subcellular location is the cytoskeleton. The protein resides in the spindle. The catalysed reaction is L-seryl-[protein] + ATP = O-phospho-L-seryl-[protein] + ADP + H(+). It catalyses the reaction L-threonyl-[protein] + ATP = O-phospho-L-threonyl-[protein] + ADP + H(+). With respect to regulation, activated in response to hyperosmotic stress: cell shrinkage promotes formation of a membraneless compartment that concentrates WNK1 with its substrates, OXSR1/OSR1 and STK39/SPAK. Activation requires autophosphorylation of Ser-382 and, to a lower extent, Ser-378. Autophosphorylation and subsequent activation is inhibited by increases in intracellular ionic strength: Cl(-) potently inhibits WNK1 kinase activity via direct binding. Also inhibited by K(+) ions. Serine/threonine-protein kinase component of the WNK1-SPAK/OSR1 kinase cascade, which acts as a key regulator of blood pressure and regulatory volume increase by promoting ion influx. WNK1 mediates regulatory volume increase in response to hyperosmotic stress by acting as a molecular crowding sensor, which senses cell shrinkage and mediates formation of a membraneless compartment by undergoing liquid-liquid phase separation. The membraneless compartment concentrates WNK1 with its substrates, OXSR1/OSR1 and STK39/SPAK, promoting WNK1-dependent phosphorylation and activation of downstream kinases OXSR1/OSR1 and STK39/SPAK. Following activation, OXSR1/OSR1 and STK39/SPAK catalyze phosphorylation of ion cotransporters SLC12A1/NKCC2, SLC12A2/NKCC1, SLC12A5/KCC2 and SLC12A6/KCC3, regulating their activity. Phosphorylation of Na-K-Cl cotransporters SLC12A2/NKCC1 and SLC12A2/NKCC1 promote their activation and ion influx; simultaneously, phosphorylation of K-Cl cotransporters SLC12A5/KCC2 and SLC12A6/KCC3 inhibit their activity, blocking ion efflux. Also acts as a regulator of angiogenesis in endothelial cells. Also acts independently of the WNK1-SPAK/OSR1 kinase cascade by catalyzing phosphorylation of other substrates, such as SYT2, PCF11 and NEDD4L. Mediates phosphorylation of SYT2, regulating SYT2 association with phospholipids and membrane-binding. Regulates mRNA export in the nucleus by mediating phosphorylation of PCF11, thereby decreasing the association between PCF11 and POLR2A/RNA polymerase II and promoting mRNA export to the cytoplasm. Acts as a negative regulator of autophagy. Required for the abscission step during mitosis, independently of the WNK1-SPAK/OSR1 kinase cascade. WNK1 may also play a role in actin cytoskeletal reorganization. Also acts as a scaffold protein independently of its protein kinase activity: negatively regulates cell membrane localization of various transporters and channels, such as SLC4A4, SLC26A6, SLC26A9, TRPV4 and CFTR. Involved in the regulation of epithelial Na(+) channel (ENaC) by promoting activation of SGK1 in a kinase-independent manner: probably acts as a scaffold protein that promotes the recruitment of SGK1 to the mTORC2 complex in response to chloride, leading to mTORC2-dependent phosphorylation and activation of SGK1. Acts as an assembly factor for the ER membrane protein complex independently of its protein kinase activity: associates with EMC2 in the cytoplasm via its amphipathic alpha-helix, and prevents EMC2 ubiquitination and subsequent degradation, thereby promoting EMC2 stabilization. In terms of biological role, kinase-defective isoform specifically expressed in kidney, which acts as a dominant-negative regulator of the longer isoform 1. Does not directly inhibit WNK4 and has no direct effect on sodium and chloride ion transport. Down-regulates sodium-chloride cotransporter activity indirectly by inhibiting isoform 1, it associates with isoform 1 and attenuates its kinase activity. In kidney, may play an important role regulating sodium and potassium balance. The chain is Serine/threonine-protein kinase WNK1 from Mus musculus (Mouse).